A 490-amino-acid chain; its full sequence is Betaine aldehyde dehydrogenase (490 aa).

Positions 26, 27, and 93 each coordinate K(+). 150–152 (GAW) serves as a coordination point for NAD(+). The active-site Charge relay system is lysine 162. 176 to 179 (KPSE) serves as a coordination point for NAD(+). Valine 180 is a K(+) binding site. 230-233 (GVAS) serves as a coordination point for NAD(+). Leucine 246 provides a ligand contact to K(+). The Proton acceptor role is filled by glutamate 252. NAD(+) contacts are provided by glycine 254, cysteine 286, and glutamate 387. The active-site Nucleophile is the cysteine 286. Cysteine 286 carries the post-translational modification Cysteine sulfenic acid (-SOH). 2 residues coordinate K(+): lysine 457 and glycine 460. The active-site Charge relay system is the glutamate 464.

Belongs to the aldehyde dehydrogenase family. In terms of assembly, dimer of dimers. K(+) serves as cofactor.

The catalysed reaction is betaine aldehyde + NAD(+) + H2O = glycine betaine + NADH + 2 H(+). Its pathway is amine and polyamine biosynthesis; betaine biosynthesis via choline pathway; betaine from betaine aldehyde: step 1/1. Its function is as follows. Involved in the biosynthesis of the osmoprotectant glycine betaine. Catalyzes the irreversible oxidation of betaine aldehyde to the corresponding acid. The protein is Betaine aldehyde dehydrogenase of Escherichia coli O7:K1 (strain IAI39 / ExPEC).